The following is a 304-amino-acid chain: Ornithine carbamoyltransferase (304 aa).

Residues 47–50 (STRT), Arg98, and 125–128 (HPCQ) contribute to the carbamoyl phosphate site. Residues Asn156, Asp221, and 225 to 226 (SM) each bind L-ornithine. Carbamoyl phosphate-binding positions include 262–263 (CL) and Arg290.

This sequence belongs to the aspartate/ornithine carbamoyltransferase superfamily. OTCase family.

It is found in the cytoplasm. It carries out the reaction carbamoyl phosphate + L-ornithine = L-citrulline + phosphate + H(+). It participates in amino-acid biosynthesis; L-arginine biosynthesis; L-arginine from L-ornithine and carbamoyl phosphate: step 1/3. In terms of biological role, reversibly catalyzes the transfer of the carbamoyl group from carbamoyl phosphate (CP) to the N(epsilon) atom of ornithine (ORN) to produce L-citrulline. The polypeptide is Ornithine carbamoyltransferase (Methanococcus maripaludis (strain C7 / ATCC BAA-1331)).